Consider the following 61-residue polypeptide: Short neurotoxin 2 (61 aa).

4 cysteine pairs are disulfide-bonded: C3/C23, C17/C40, C42/C53, and C54/C59.

Belongs to the three-finger toxin family. Short-chain subfamily. Type I alpha-neurotoxin sub-subfamily. In terms of tissue distribution, expressed by the venom gland.

It is found in the secreted. In terms of biological role, binds to muscle nicotinic acetylcholine receptor (nAChR) and inhibit acetylcholine from binding to the receptor, thereby impairing neuromuscular transmission. In Naja nivea (Cape cobra), this protein is Short neurotoxin 2.